Reading from the N-terminus, the 361-residue chain is Probable dual-specificity RNA methyltransferase RlmN (361 aa).

Glutamate 91 functions as the Proton acceptor in the catalytic mechanism. Residues 97–329 (QHYGLSVCVT…KKKGGNCVVR (233 aa)) enclose the Radical SAM core domain. A disulfide bond links cysteine 104 and cysteine 340. [4Fe-4S] cluster is bound by residues cysteine 111, cysteine 115, and cysteine 118. Residues 163 to 164 (GE), serine 195, 218 to 220 (SLH), and asparagine 296 each bind S-adenosyl-L-methionine. The S-methylcysteine intermediate role is filled by cysteine 340.

This sequence belongs to the radical SAM superfamily. RlmN family. The cofactor is [4Fe-4S] cluster.

The protein localises to the cytoplasm. It catalyses the reaction adenosine(2503) in 23S rRNA + 2 reduced [2Fe-2S]-[ferredoxin] + 2 S-adenosyl-L-methionine = 2-methyladenosine(2503) in 23S rRNA + 5'-deoxyadenosine + L-methionine + 2 oxidized [2Fe-2S]-[ferredoxin] + S-adenosyl-L-homocysteine. The enzyme catalyses adenosine(37) in tRNA + 2 reduced [2Fe-2S]-[ferredoxin] + 2 S-adenosyl-L-methionine = 2-methyladenosine(37) in tRNA + 5'-deoxyadenosine + L-methionine + 2 oxidized [2Fe-2S]-[ferredoxin] + S-adenosyl-L-homocysteine. Its function is as follows. Specifically methylates position 2 of adenine 2503 in 23S rRNA and position 2 of adenine 37 in tRNAs. The protein is Probable dual-specificity RNA methyltransferase RlmN of Streptococcus pneumoniae (strain Hungary19A-6).